The chain runs to 199 residues: ATP-dependent Clp protease proteolytic subunit (199 aa).

The Nucleophile role is filled by serine 99. Histidine 124 is a catalytic residue.

It belongs to the peptidase S14 family. As to quaternary structure, fourteen ClpP subunits assemble into 2 heptameric rings which stack back to back to give a disk-like structure with a central cavity, resembling the structure of eukaryotic proteasomes.

The protein resides in the cytoplasm. It catalyses the reaction Hydrolysis of proteins to small peptides in the presence of ATP and magnesium. alpha-casein is the usual test substrate. In the absence of ATP, only oligopeptides shorter than five residues are hydrolyzed (such as succinyl-Leu-Tyr-|-NHMec, and Leu-Tyr-Leu-|-Tyr-Trp, in which cleavage of the -Tyr-|-Leu- and -Tyr-|-Trp bonds also occurs).. In terms of biological role, cleaves peptides in various proteins in a process that requires ATP hydrolysis. Has a chymotrypsin-like activity. Plays a major role in the degradation of misfolded proteins. This is ATP-dependent Clp protease proteolytic subunit from Moorella thermoacetica (strain ATCC 39073 / JCM 9320).